The primary structure comprises 286 residues: Probable transport system permease protein NifC (286 aa).

A run of 6 helical transmembrane segments spans residues 34-54 (LFLA…ISMI), 75-95 (IILS…IGTP), 114-134 (IFVE…LLLA), 152-172 (VIFT…ALYV), 216-236 (GLIL…MFAG), and 257-277 (IKMA…LLLL). Residues 75 to 278 (IILSFVTSLI…IMTFVLLLLV (204 aa)) form the ABC transmembrane type-1 domain.

Belongs to the binding-protein-dependent transport system permease family. CysTW subfamily.

It localises to the cell membrane. May be involved in molybdenum transport. This Clostridium pasteurianum protein is Probable transport system permease protein NifC (nifC).